The sequence spans 466 residues: Adenosylhomocysteinase (466 aa).

Residues Thr-57, Asp-132, and Glu-192 each contribute to the substrate site. An NAD(+)-binding site is contributed by 193–195 (TTT). 2 residues coordinate substrate: Lys-222 and Asp-226. Residues Asn-227, 256–261 (GYGDVG), Glu-279, Asn-314, 335–337 (IGH), and Asn-380 each bind NAD(+).

Belongs to the adenosylhomocysteinase family. Requires NAD(+) as cofactor.

Its subcellular location is the cytoplasm. The enzyme catalyses S-adenosyl-L-homocysteine + H2O = L-homocysteine + adenosine. It functions in the pathway amino-acid biosynthesis; L-homocysteine biosynthesis; L-homocysteine from S-adenosyl-L-homocysteine: step 1/1. Functionally, may play a key role in the regulation of the intracellular concentration of adenosylhomocysteine. This is Adenosylhomocysteinase from Rhizobium meliloti (strain 1021) (Ensifer meliloti).